A 100-amino-acid polypeptide reads, in one-letter code: Urease subunit gamma (100 aa).

This sequence belongs to the urease gamma subunit family. In terms of assembly, heterotrimer of UreA (gamma), UreB (beta) and UreC (alpha) subunits. Three heterotrimers associate to form the active enzyme.

The protein localises to the cytoplasm. It carries out the reaction urea + 2 H2O + H(+) = hydrogencarbonate + 2 NH4(+). It functions in the pathway nitrogen metabolism; urea degradation; CO(2) and NH(3) from urea (urease route): step 1/1. The chain is Urease subunit gamma from Paracidovorax citrulli (strain AAC00-1) (Acidovorax citrulli).